Reading from the N-terminus, the 256-residue chain is Na(+)-translocating NADH-quinone reductase subunit C (256 aa).

The chain crosses the membrane as a helical span at residues 12–32; sequence LGVVIGLSLVCSIIVSTAAVG. FMN phosphoryl threonine is present on Thr-224.

Belongs to the NqrC family. As to quaternary structure, composed of six subunits; NqrA, NqrB, NqrC, NqrD, NqrE and NqrF. FMN serves as cofactor.

It is found in the cell inner membrane. The catalysed reaction is a ubiquinone + n Na(+)(in) + NADH + H(+) = a ubiquinol + n Na(+)(out) + NAD(+). This reaction is tightly coupled to the Na(+) pumping activity and specifically requires Na(+) for activity. Inhibited by korormicin and 2-N-heptyl-4-hydroxyquinoline N-oxide (HQNO). Functionally, NQR complex catalyzes the reduction of ubiquinone-1 to ubiquinol by two successive reactions, coupled with the transport of Na(+) ions from the cytoplasm to the periplasm. NqrA to NqrE are probably involved in the second step, the conversion of ubisemiquinone to ubiquinol. This Vibrio alginolyticus protein is Na(+)-translocating NADH-quinone reductase subunit C.